Here is a 723-residue protein sequence, read N- to C-terminus: Lim and transglutaminase domain protein ltd-1 (723 aa).

The 68-residue stretch at 5-72 (QHCNRCGKQV…SNHVPIAGPH (68 aa)) folds into the LIM zinc-binding domain.

It belongs to the transglutaminase-like superfamily. Expressed in the Y and U rectal epithelial cells, in marginal cells of the terminal bulb and isthmus of the pharynx (at protein level).

The protein localises to the cytoplasm. Its subcellular location is the cytoskeleton. Functionally, cytoskeleton-associated protein. May play a role in hypodermal cell development. This Caenorhabditis elegans protein is Lim and transglutaminase domain protein ltd-1.